The following is a 581-amino-acid chain: Nicotinic acid-CoA ligase pyr1 (581 aa).

204-215 (MFLTSGTSGLPK) lines the AMP pocket. An AMP-binding region spans residues 477-555 (EIEGILLKDP…DEIPRTGIGK (79 aa)).

The protein belongs to the ATP-dependent AMP-binding enzyme family.

It catalyses the reaction nicotinate + ATP + CoA = nicotinyl-CoA + AMP + diphosphate. Its pathway is secondary metabolite biosynthesis; terpenoid biosynthesis. Functionally, nicotinic acid-CoA ligase; part of the gene cluster that mediates the biosynthesis of pyripyropene A, a specific human acyl-coenzyme A:cholesterol acyltransferase 2 inhibitor. The first step of the pathway is the synthesis of nicotinyl-CoA from nicotinic acid by the nicotinic acid-CoA ligase pyr1. Nicotinyl-CoA is then a substrate of polyketide synthase pyr2 to produce 4-hydroxy-6-(3-pyridinyl)-2H-pyran-2-one (HPPO) which is further prenylated by the polyprenyl transferase pyr6 to yield farnesyl-HPPO. The next steps consist of an epoxidation of farnesyl-HPPO to epoxyfarnesyl-HPPO by FAD-dependent monooxygenase pyr5 and a cyclization of the terpenoid portion by the terpene cyclase pyr4 to yield deacetyl-pyripyropene E. The 2 cytochrome P450 monooxygenases pyr3 and pyr9, and the 2 acetyltransferases pyr7 and pyr8 are involved in the conversion of deacetyl-pyripyropene E into pyripyropene A through several cycles of oxidation and acetylation steps. Pyr7 acetylates deacetyl-pyripyropene E to pyripyropene E which is oxidized to 11-deacetyl-pyripyropene O by pyr3, which is in turn acetylated into pyripyropene O by pyr8. Pyripyropene O is then oxidized to deacetyl-pyripyropene A by pyr9. Deacetyl-pyripyropene A is finally acetylated to pyripyropene A by pyr8. The sequence is that of Nicotinic acid-CoA ligase pyr1 from Aspergillus fumigatus (strain ATCC MYA-4609 / CBS 101355 / FGSC A1100 / Af293) (Neosartorya fumigata).